We begin with the raw amino-acid sequence, 1456 residues long: MTPSNSLSSSERSLSGECSVDGNSCDRGIEDECSSHSSQEDVELTKEVKVDRLERKSKSMPSDILDILDEKSKENSVENVQFLSDREDDSDDVPVWEPPEPENPEDEVDGVFADDDDDCCDGSKWNKASLLGELSDESSEKRKVYEENRRVMLEEADSKFKFIVSQLIKSAGFSIEESGYWFEIVARLCWEAASMLKPAIDGKSVDPTEYIKVKCIATGSCVDSEVFKGLVFKKHAALKHMATKYEHPRIMLVEGVLGHPISGFSSLQSVNQDNEYLLKYVKPVVDIIEASKPDVMLVEKSVSRDIQKTILDKGVTLVFDMKLHRLQRISRCIGSPILSVDSLSSQKLKHCDSFRIEKIVEEHNAAGESDKKPTKTLMFLEGCPTRLGCTILLKGCHSERLKKVKEVVQYSFILAYHLMLEASFLADRHTMFSTIFAKEATSCVVEIENFSPSPSPRESPSEAVDIPVSNGFDEQTIQINGEADGEKVGTWESDGDHVFSHEPYNPVIFTGFSSLSARLSKYLGFVQNPESVPVSVDTDVSTTSNLDSIRESEEDTAEKNEDKQPLLLDPELPVNSSSDDGDNKSQTENDIESTLESQSILVLVSKRNALRGIMCDQRHFSHIKFYKHFDVPLEKFLRDMFNQRNLCQTCVEFPEAHLYYYAHQNKQLTIQIKRIPVAKGLAGEAKGKIWMWSRCGKCKTKNASRKSTKRVLISTAARSLSFGKFLELSFSQQTFLNRSSSCGHSFDSDFLHFFGLGSMVAMLSYSQVASYTVSLPPMKLESSILIKAGWLEKEFQTVFTKGISLFEDAAGFLKRLRSQFTNSDLRYQRARKLLSNIEELLKHERCIFEENIKNSFDKAKTIDDVSHRLLRLNRMRWELLLQALIWNYRLQSLVLSDRLLPSSDETKIYEQGLKTVSEAGMTRYENDNKVSDSGSNGGIDTPLVEHKDIPIAGASVGDNDQMAESYVPEDNESQTLCSSSPDTTSPINNHFDTHLAVNVHSTNGQEADKSIPVTGESLDDEVSTSNGPHILGWDEWFWLPFEELRSKRIVDIEKEYLLKFEYVNNFTQENLQTVNQIITEESSRLRISLRDDDFIVSDYEDELSSLIACALAHLNNEESKKPLSRCIHGSLQGFLDNNQDSKQTDRDVSRFSSESTNRLETLPPPEVLVTFGSVKSVGKPKYSIVSLYADDFRDLRKRCCSSELDYIASLSRCKPWDAKGGKSKSVFAKTLDDRFIVKEIKKTEYESFVTFATEYFKYMKDSYDLGNQTCLAKVLGIHQVTVRQPKGGGKEIRHDLMVMENLSFSRKVTRQYDLKGALHARFTATSANGEDDVLLDQNFVNDMNKSPLYVSKTSKQNLQRAVYNDTSFLTSINVMDYSLLVGVDDENHELVCGIIDYLRQYTWDKQLETWVKSSLVVPKNVQPTVISPIDYKTRFRKFMKTHFLCVPDQWCDQGDS.

Over residues 1-19 (MTPSNSLSSSERSLSGECS) the composition is skewed to low complexity. 6 disordered regions span residues 1–110 (MTPS…EVDG), 533–592 (PVSV…NDIE), 925–944 (ENDN…TPLV), 967–987 (VPED…TSPI), 1003–1022 (NGQE…DDEV), and 1137–1159 (NNQD…TNRL). A compositionally biased stretch (basic and acidic residues) spans 43-57 (ELTKEVKVDRLERKS). Over residues 86 to 110 (REDDSDDVPVWEPPEPENPEDEVDG) the composition is skewed to acidic residues. The segment covering 533-544 (PVSVDTDVSTTS) has biased composition (low complexity). The span at 973–987 (SQTLCSSSPDTTSPI) shows a compositional bias: polar residues. The PIPK domain occupies 1115 to 1443 (NNEESKKPLS…RFRKFMKTHF (329 aa)). The segment covering 1150–1159 (RFSSESTNRL) has biased composition (polar residues).

Component of the PI(3,5)P2 regulatory complex at least composed of ATG18, SAC/FIG4, FAB1 and VAC14. It depends on Mg(2+) as a cofactor. Requires Mn(2+) as cofactor.

It carries out the reaction a 1,2-diacyl-sn-glycero-3-phospho-(1D-myo-inositol-3-phosphate) + ATP = a 1,2-diacyl-sn-glycero-3-phospho-(1D-myo-inositol-3,5-bisphosphate) + ADP + H(+). The PI(3,5)P2 regulatory complex regulates both the synthesis and turnover of phosphatidylinositol 3,5-bisphosphate (PtdIns(3,5)P2). Catalyzes the phosphorylation of phosphatidylinositol 3-phosphate on the fifth hydroxyl of the myo-inositol ring, to form phosphatidylinositol 3,5-bisphosphate. This is Putative 1-phosphatidylinositol-3-phosphate 5-kinase FAB1D (FAB1D) from Arabidopsis thaliana (Mouse-ear cress).